The chain runs to 206 residues: Small ribosomal subunit protein uS4 (206 aa).

The S4 RNA-binding domain maps to 96 to 156 (GRLDNVVYRM…EKSKKQARIK (61 aa)).

This sequence belongs to the universal ribosomal protein uS4 family. Part of the 30S ribosomal subunit. Contacts protein S5. The interaction surface between S4 and S5 is involved in control of translational fidelity.

Its function is as follows. One of the primary rRNA binding proteins, it binds directly to 16S rRNA where it nucleates assembly of the body of the 30S subunit. Functionally, with S5 and S12 plays an important role in translational accuracy. In Haemophilus influenzae (strain ATCC 51907 / DSM 11121 / KW20 / Rd), this protein is Small ribosomal subunit protein uS4.